The chain runs to 410 residues: Platelet-activating factor acetylhydrolase IB subunit alpha (410 aa).

Residues 1–38 are required for self-association and interaction with PAFAH1B2 and PAFAH1B3; the sequence is MVLSQRQRDELNRAIADYLRSNGYEEAYSVFKKEAELD. Residues 1 to 66 form an interaction with NDE1 region; it reads MVLSQRQRDE…SVIRLQKKVM (66 aa). Residues 1 to 102 form an interaction with NDEL1 region; it reads MVLSQRQRDE…EWIPRPPEKY (102 aa). Residues 7-39 enclose the LisH domain; sequence QRDELNRAIADYLRSNGYEEAYSVFKKEAELDM. An N6-acetyllysine modification is found at lysine 53. A coiled-coil region spans residues 56–82; that stretch reads TSVIRLQKKVMELESKLNEAKEEFTSG. Positions 83-410 are interaction with dynein and dynactin; it reads GPLGQKRDPK…DQTVKVWECR (328 aa). WD repeat units lie at residues 106-147, 148-187, 190-229, 232-271, 274-333, 336-377, and 378-410; these read GHRS…RTLK, GHTDSVQDISFDHSGKLLTSCSADMTIKLWDFQGFECIRT, GHDHNVSSVAIMPNGDHLVSASRDKTIKMWEVQTGYCVKT, GHREWVRMVRPNQDGTLIASCSNDQTVRVWVVATKECKAE, EHEH…CLMT, GHDN…KTLN, and AHEHFVTSLDFHKTAPYVVTGSVDQTVKVWECR. A Phosphoserine modification is found at serine 109. The interaction with DCX stretch occupies residues 367–409; sequence YKNKRCMKTLNAHEHFVTSLDFHKTAPYVVTGSVDQTVKVWEC. The segment at 388–410 is interaction with NDEL1; it reads FHKTAPYVVTGSVDQTVKVWECR.

Belongs to the WD repeat LIS1/nudF family. Can self-associate. Component of the cytosolic PAF-AH (I) heterotetrameric enzyme, which is composed of PAFAH1B1 (beta), PAFAH1B2 (alpha2) and PAFAH1B3 (alpha1) subunits. The catalytic activity of the enzyme resides in the alpha1 (PAFAH1B3) and alpha2 (PAFAH1B2) subunits, whereas the beta subunit (PAFAH1B1) has regulatory activity. Trimer formation is not essential for the catalytic activity. Interacts with the catalytic dimer of PAF-AH (I) heterotetrameric enzyme: interacts with PAFAH1B2 homodimer (alpha2/alpha2 homodimer), PAFAH1B3 homodimer (alpha1/alpha1 homodimer) and PAFAH1B2-PAFAH1B3 heterodimer (alpha2/alpha1 heterodimer). Interacts with DCX, dynein, dynactin, IQGAP1, KATNB1, NDE1, NDEL1, NUDC and RSN. Interacts with DISC1, and this interaction is enhanced by NDEL1. Interacts with DAB1 when DAB1 is phosphorylated in response to RELN/reelin signaling. Interacts with INTS13. Interacts with DCDC1.

The protein resides in the cytoplasm. Its subcellular location is the cytoskeleton. It is found in the microtubule organizing center. The protein localises to the centrosome. It localises to the spindle. The protein resides in the nucleus membrane. Regulatory subunit (beta subunit) of the cytosolic type I platelet-activating factor (PAF) acetylhydrolase (PAF-AH (I)), an enzyme that catalyzes the hydrolyze of the acetyl group at the sn-2 position of PAF and its analogs and participates in PAF inactivation. Regulates the PAF-AH (I) activity in a catalytic dimer composition-dependent manner. Positively regulates the activity of the minus-end directed microtubule motor protein dynein. May enhance dynein-mediated microtubule sliding by targeting dynein to the microtubule plus end. Required for several dynein- and microtubule-dependent processes such as the maintenance of Golgi integrity, the peripheral transport of microtubule fragments and the coupling of the nucleus and centrosome. Required during brain development for the proliferation of neuronal precursors and the migration of newly formed neurons from the ventricular/subventricular zone toward the cortical plate. Neuronal migration involves a process called nucleokinesis, whereby migrating cells extend an anterior process into which the nucleus subsequently translocates. During nucleokinesis dynein at the nuclear surface may translocate the nucleus towards the centrosome by exerting force on centrosomal microtubules. Also required for proper activation of Rho GTPases and actin polymerization at the leading edge of locomoting cerebellar neurons and postmigratory hippocampal neurons in response to calcium influx triggered via NMDA receptors. May also play a role in other forms of cell locomotion including the migration of fibroblasts during wound healing. Required for dynein recruitment to microtubule plus ends and BICD2-bound cargos. May modulate the Reelin pathway through interaction of the PAF-AH (I) catalytic dimer with VLDLR. The protein is Platelet-activating factor acetylhydrolase IB subunit alpha of Macaca fascicularis (Crab-eating macaque).